Reading from the N-terminus, the 143-residue chain is MNKTYLAPTKNYSTWYIIDAKNKNLGRLSSKIAKLLRGKNSISFTPYVNNKIYIILINSRSINVTGKKFVQKTYKRHSGYPGGLKVQKFNEILNQRPNRILEKSIKGMLPKGILGRQLFRQLKIYPDNIHPHESQQPKIITFI.

The protein belongs to the universal ribosomal protein uL13 family. As to quaternary structure, part of the 50S ribosomal subunit.

It localises to the plastid. The protein resides in the chloroplast. The polypeptide is Large ribosomal subunit protein uL13c (Gracilaria tenuistipitata var. liui (Red alga)).